The primary structure comprises 86 residues: Small muscular protein (86 aa).

A disordered region spans residues 20 to 64; that stretch reads MGAFRPGAGQPPRRKECTPEIEEGAPPTSDEEKKPIPGAKKLPGP.

This sequence belongs to the SMPX family.

Plays a role in the regulatory network through which muscle cells coordinate their structural and functional states during growth, adaptation, and repair. The polypeptide is Small muscular protein (SMPX) (Bos taurus (Bovine)).